The chain runs to 319 residues: Putative peptide biosynthesis protein YydG (319 aa).

Residues 1–214 enclose the Radical SAM core domain; the sequence is MYNKTVSINL…HCPGYDIVYH (214 aa). The [4Fe-4S] cluster site is built by Cys-14, Cys-18, and Cys-21.

[4Fe-4S] cluster serves as cofactor.

Required for production of the modified peptide YydF. May activate a metalloenzyme (Potential). The polypeptide is Putative peptide biosynthesis protein YydG (yydG) (Bacillus subtilis (strain 168)).